A 708-amino-acid polypeptide reads, in one-letter code: MATTAELFEEPFVADEYIERLVWRTPGGGSRGGPEAFDPKRLLEEFVNHIQELQIMDERIQRKVEKLEQQCQKEAKEFAKKVQELQKSNQVAFQHFQELDEHISYVATKVCHLGDQLEGVNTPRQRAVEAQKLMKYFNEFLDGELKSDVFTNSEKIKEAADIIQKLHLIAQELPFDRFSEVKSKIASKYHDLECQLIQEFTSAQRRGEISRMREVAAVLLHFKGYSHCVDVYIKQCQEGAYLRNDIFEDAGILCQRVNKQVGDIFSNPETVLAKLIQNVFEIKLQSFVKEQLEECRKSDAEQYLKNLYDLYTRTTNLSSKLMEFNLGTDKQTFLSKLIKSIFISYLENYIEVETGYLKSRSAMILQRYYDSKNHQKRSIGTGGIQDLKERIRQRTNLPLGPSIDTHGETFLSQEVVVNLLQETKQAFERCHRLSDPSDLPRNAFRIFTILVEFLCIEHIDYALETGLAGIPSSDSRNANLYFLDVVQQANTIFHLFDKQFNDHLMPLISSSPKLSECLQKKKEIIEQMEMKLDTGIDRTLNCMIGQMKHILAAEQKKTDFKPEDENNVLIQYTNACVKVCAYVRKQVEKIKNSMDGKNVDTVLMELGVRFHRLIYEHLQQYSYSCMGGMLAICDVAEYRKCAKDFKIPMVLHLFDTLHALCNLLVVAPDNLKQVCSGEQLANLDKNILHSFVQLRADYRSARLARHFS.

A2 is modified (N-acetylalanine). A coiled-coil region spans residues 40–101 (KRLLEEFVNH…AFQHFQELDE (62 aa)). T122, T395, and T405 each carry phosphothreonine. S412 carries the phosphoserine modification.

It belongs to the SEC10 family. In terms of assembly, the exocyst complex is composed of EXOC1, EXOC2, EXOC3, EXOC4, EXOC5, EXOC6, EXOC7 and EXOC8. Interacts with EXOC3L1. Ubiquitous.

The protein localises to the cytoplasm. It is found in the midbody. Its function is as follows. Component of the exocyst complex involved in the docking of exocytic vesicles with fusion sites on the plasma membrane. The polypeptide is Exocyst complex component 5 (EXOC5) (Homo sapiens (Human)).